We begin with the raw amino-acid sequence, 156 residues long: Transcription inhibitor protein Gfh1 (156 aa).

Residues 1–74 (MAREVKLTKA…LEDILSRAVI (74 aa)) are a coiled coil. Residues Glu-20 and Glu-24 each coordinate Zn(2+).

Belongs to the GreA/GreB family. In terms of assembly, interacts with RNAP.

Inhibits all catalytic activities of RNA polymerase (RNAP) by partially occluding its substrate-binding site and preventing NTP binding. The chain is Transcription inhibitor protein Gfh1 (gfh1) from Thermus thermophilus (strain ATCC 27634 / DSM 579 / HB8).